We begin with the raw amino-acid sequence, 910 residues long: Disease resistance protein RPH8A (910 aa).

Residues 15 to 57 (DLLSRESERLQGIDEQLDGLKRQLRSLQSLLKDADAKKHGSDR) adopt a coiled-coil conformation. Positions 146–459 (RQRVQREIRQ…AEGIYDGSTI (314 aa)) constitute an NB-ARC domain. 192–199 (GMGGIGKT) is a binding site for ATP.

This sequence belongs to the disease resistance NB-LRR family. RPP8/HRT subfamily.

Its function is as follows. Disease resistance protein. Resistance proteins guard the plant against pathogens that contain an appropriate avirulence protein via an indirect interaction with this avirulence protein. That triggers a defense system including the hypersensitive response, which restricts the pathogen growth. In contrast to RPP8, it does not specifically recognize the Emco5 avirulence protein from Hyaloperonospora parasitica. The chain is Disease resistance protein RPH8A (RPH8A) from Arabidopsis thaliana (Mouse-ear cress).